The following is a 197-amino-acid chain: MAKMMEPRFKLSRSLGVNIYGHPKAMQRAGKTAGRASKKLSSYGLQLLEKQKLRAYYGVLEKQFVIYVEKAMKASGLSGEALIQSLECRLDNMVYRMGFASSIREARQMVNHGHILVNGKKVDRPSYPIQVDDAVALRERSQKIEKYLSNLKNTTINFDYIETDVSSFTGRLLRIPNREEIPVEVNEQLVIEFYSKK.

The S4 RNA-binding domain maps to 88-153; that stretch reads CRLDNMVYRM…IEKYLSNLKN (66 aa).

The protein belongs to the universal ribosomal protein uS4 family. In terms of assembly, part of the 30S ribosomal subunit. Contacts protein S5. The interaction surface between S4 and S5 is involved in control of translational fidelity.

Functionally, one of the primary rRNA binding proteins, it binds directly to 16S rRNA where it nucleates assembly of the body of the 30S subunit. With S5 and S12 plays an important role in translational accuracy. This Alkaliphilus oremlandii (strain OhILAs) (Clostridium oremlandii (strain OhILAs)) protein is Small ribosomal subunit protein uS4B.